We begin with the raw amino-acid sequence, 565 residues long: Mannosyl-oligosaccharide 1,2-alpha-mannosidase (565 aa).

A disulfide bridge connects residues cysteine 320 and cysteine 363. Glutamate 378 (proton donor) is an active-site residue. Residue threonine 501 coordinates Ca(2+). Composition is skewed to basic and acidic residues over residues 526 to 538 (NEKAQMRESKVID) and 550 to 565 (KSADQEAKEIIEEIAG). Residues 526-565 (NEKAQMRESKVIDKSNLPEAQPVDKSADQEAKEIIEEIAG) form a disordered region.

This sequence belongs to the glycosyl hydrolase 47 family. Ca(2+) is required as a cofactor.

The catalysed reaction is N(4)-(alpha-D-Man-(1-&gt;2)-alpha-D-Man-(1-&gt;2)-alpha-D-Man-(1-&gt;3)-[alpha-D-Man-(1-&gt;2)-alpha-D-Man-(1-&gt;3)-[alpha-D-Man-(1-&gt;2)-alpha-D-Man-(1-&gt;6)]-alpha-D-Man-(1-&gt;6)]-beta-D-Man-(1-&gt;4)-beta-D-GlcNAc-(1-&gt;4)-beta-D-GlcNAc)-L-asparaginyl-[protein] (N-glucan mannose isomer 9A1,2,3B1,2,3) + 4 H2O = N(4)-(alpha-D-Man-(1-&gt;3)-[alpha-D-Man-(1-&gt;3)-[alpha-D-Man-(1-&gt;6)]-alpha-D-Man-(1-&gt;6)]-beta-D-Man-(1-&gt;4)-beta-D-GlcNAc-(1-&gt;4)-beta-D-GlcNAc)-L-asparaginyl-[protein] (N-glucan mannose isomer 5A1,2) + 4 beta-D-mannose. It catalyses the reaction N(4)-(alpha-D-Man-(1-&gt;2)-alpha-D-Man-(1-&gt;2)-alpha-D-Man-(1-&gt;3)-[alpha-D-Man-(1-&gt;3)-[alpha-D-Man-(1-&gt;2)-alpha-D-Man-(1-&gt;6)]-alpha-D-Man-(1-&gt;6)]-beta-D-Man-(1-&gt;4)-beta-D-GlcNAc-(1-&gt;4)-beta-D-GlcNAc)-L-asparaginyl-[protein] (N-glucan mannose isomer 8A1,2,3B1,3) + 3 H2O = N(4)-(alpha-D-Man-(1-&gt;3)-[alpha-D-Man-(1-&gt;3)-[alpha-D-Man-(1-&gt;6)]-alpha-D-Man-(1-&gt;6)]-beta-D-Man-(1-&gt;4)-beta-D-GlcNAc-(1-&gt;4)-beta-D-GlcNAc)-L-asparaginyl-[protein] (N-glucan mannose isomer 5A1,2) + 3 beta-D-mannose. It functions in the pathway protein modification; protein glycosylation. Functionally, involved in the maturation of Asn-linked oligosaccharides. Trim a single alpha-1,2-linked mannose residue from Man(9)GlcNAc(2) to produce Man(8)GlcNAc(2). This is Mannosyl-oligosaccharide 1,2-alpha-mannosidase (MNS1) from Candida albicans (Yeast).